A 364-amino-acid chain; its full sequence is Peptide chain release factor 2 (364 aa).

Gln252 is subject to N5-methylglutamine.

Belongs to the prokaryotic/mitochondrial release factor family. Post-translationally, methylated by PrmC. Methylation increases the termination efficiency of RF2.

The protein localises to the cytoplasm. In terms of biological role, peptide chain release factor 2 directs the termination of translation in response to the peptide chain termination codons UGA and UAA. The chain is Peptide chain release factor 2 from Clostridium perfringens (strain SM101 / Type A).